Reading from the N-terminus, the 222-residue chain is Deoxyribose-phosphate aldolase (222 aa).

The active-site Proton donor/acceptor is Asp93. The active-site Schiff-base intermediate with acetaldehyde is the Lys156. The active-site Proton donor/acceptor is the Lys186.

Belongs to the DeoC/FbaB aldolase family. DeoC type 1 subfamily.

The protein localises to the cytoplasm. It carries out the reaction 2-deoxy-D-ribose 5-phosphate = D-glyceraldehyde 3-phosphate + acetaldehyde. The protein operates within carbohydrate degradation; 2-deoxy-D-ribose 1-phosphate degradation; D-glyceraldehyde 3-phosphate and acetaldehyde from 2-deoxy-alpha-D-ribose 1-phosphate: step 2/2. Its function is as follows. Catalyzes a reversible aldol reaction between acetaldehyde and D-glyceraldehyde 3-phosphate to generate 2-deoxy-D-ribose 5-phosphate. The protein is Deoxyribose-phosphate aldolase of Nocardia farcinica (strain IFM 10152).